Reading from the N-terminus, the 447-residue chain is Phosphoglucosamine mutase (447 aa).

Catalysis depends on S102, which acts as the Phosphoserine intermediate. Mg(2+) contacts are provided by S102, D241, D243, and D245. S102 carries the phosphoserine modification.

This sequence belongs to the phosphohexose mutase family. Mg(2+) serves as cofactor. In terms of processing, activated by phosphorylation.

It catalyses the reaction alpha-D-glucosamine 1-phosphate = D-glucosamine 6-phosphate. Catalyzes the conversion of glucosamine-6-phosphate to glucosamine-1-phosphate. The protein is Phosphoglucosamine mutase of Pseudoalteromonas atlantica (strain T6c / ATCC BAA-1087).